The sequence spans 102 residues: Cytochrome b (102 aa).

The next 3 helical transmembrane spans lie at 1–21 (FGSLLGLCLATQILTGLFLAM), 45–66 (WLIRNIHANGASFFFICIYLHI), and 81–101 (WNIGVVLLLLVMMTAFVGYVL). His-51 and His-65 together coordinate heme b.

This sequence belongs to the cytochrome b family. In terms of assembly, the cytochrome bc1 complex contains 3 respiratory subunits (MT-CYB, CYC1 and UQCRFS1), 2 core proteins (UQCRC1 and UQCRC2) and probably 6 low-molecular weight proteins. Heme b is required as a cofactor.

It is found in the mitochondrion inner membrane. Its function is as follows. Component of the ubiquinol-cytochrome c reductase complex (complex III or cytochrome b-c1 complex) that is part of the mitochondrial respiratory chain. The b-c1 complex mediates electron transfer from ubiquinol to cytochrome c. Contributes to the generation of a proton gradient across the mitochondrial membrane that is then used for ATP synthesis. The sequence is that of Cytochrome b (mt-cyb) from Megalops atlanticus (Tarpon).